Reading from the N-terminus, the 379-residue chain is uncharacterized protein (379 aa).

This is an uncharacterized protein from Acanthamoeba polyphaga (Amoeba).